Here is a 582-residue protein sequence, read N- to C-terminus: Trans-ocimene synthase, chloroplastic (582 aa).

Residues 1 to 35 (MSLIIQSLPHWSRIPPRPPQLSQFQNSSRPKPLIQ) constitute a chloroplast transit peptide. Positions 296, 333, 337, 474, and 477 each coordinate (2E)-geranyl diphosphate. Positions 333 and 337 each coordinate Mg(2+). The short motif at 333-337 (DDIYD) is the DDXXD motif element. 3 residues coordinate Mg(2+): Asp-477, Thr-481, and Glu-485.

Belongs to the terpene synthase family. Tpsb subfamily. As to quaternary structure, monomer. Mg(2+) is required as a cofactor. Mn(2+) serves as cofactor. As to expression, expressed in male and female leaves. Barely detectable in fruits and shoots.

The protein resides in the plastid. It localises to the chloroplast. The catalysed reaction is (2E)-geranyl diphosphate = (E)-beta-ocimene + diphosphate. The protein operates within secondary metabolite biosynthesis; terpenoid biosynthesis. Monoterpene synthase (TPS) involved in the biosynthesis of monoterpene natural products used by traditional Chinese medicine to treat headache, inflammation and intoxication. Catalyzes the conversion of (2E)-geranyl diphosphate (GPP) into (E)-beta-ocimene. This is Trans-ocimene synthase, chloroplastic from Litsea cubeba (Aromatic litsea).